We begin with the raw amino-acid sequence, 419 residues long: Histone acetyltransferase type B subunit 2 (419 aa).

5 WD repeats span residues Pro-131–Leu-171, Tyr-177–Lys-217, Ala-225–Asn-265, Asn-267–Tyr-307, and Gly-311–Thr-351. The interval Asp-353 to Asp-357 is interaction with the histone H4 N-terminus. The stretch at Gly-368–Gly-408 is one WD 6 repeat.

It belongs to the WD repeat RBAP46/RBAP48/MSI1 family. Component of the HAT-B complex composed of at least HAT1 and HAT2. The HAT-B complex binds to histone H4 tail.

The protein localises to the cytoplasm. It localises to the nucleus. Regulatory subunit of the histone acetylase B (HAT-B) complex. The complex acetylates Lys-12 of histone H4 which is required for telomeric silencing. The sequence is that of Histone acetyltransferase type B subunit 2 (HAT2) from Candida glabrata (strain ATCC 2001 / BCRC 20586 / JCM 3761 / NBRC 0622 / NRRL Y-65 / CBS 138) (Yeast).